The chain runs to 393 residues: MVSKDQTSFNKRWTLGLLMLGLVIILWVLSSFLINLIFEDDSYRKPFFITYTNTAAFIFYLFPTAKAVVVNYKDTGRANVHRELIMEEEGTGSDSNRSVDMTSPLLTNLEAGTHANQKKRLTLYETIKLSAEFCILWFTANLVTNASLAFTSVASQTILSTTSSFFTLFIGAICHVESLSKSKVLGSFISFVGIIMVTKSDSHQRYQRHIADVSGDDNDAVQVLIGNLLALAGAVLYGVYSTLLKREVGDETRVNMKIFFGFVGLFNLLFLWPSLIVLDFFGWEPFSLPKDPKVVVIIFVNCLITFVSDFCWAKAMLLTSPLTVTVGLSITIPLAMFGDVIFKHKTMSALYLFGATLILGSFFIINKSSEEEHFENSITASNYESVEVPAANN.

Topologically, residues 1–17 (MVSKDQTSFNKRWTLGL) are cytoplasmic. The chain crosses the membrane as a helical span at residues 18–38 (LMLGLVIILWVLSSFLINLIF). Residues 39-46 (EDDSYRKP) lie on the Vacuolar side of the membrane. A helical transmembrane segment spans residues 47 to 67 (FFITYTNTAAFIFYLFPTAKA). Residues 68–132 (VVVNYKDTGR…LYETIKLSAE (65 aa)) are Cytoplasmic-facing. Phosphoserine is present on Ser-93. A helical transmembrane segment spans residues 133 to 153 (FCILWFTANLVTNASLAFTSV). Over 154-156 (ASQ) the chain is Vacuolar. The chain crosses the membrane as a helical span at residues 157 to 176 (TILSTTSSFFTLFIGAICHV). Residues 177–182 (ESLSKS) are Cytoplasmic-facing. The chain crosses the membrane as a helical span at residues 183–200 (KVLGSFISFVGIIMVTKS). The Vacuolar portion of the chain corresponds to 201-219 (DSHQRYQRHIADVSGDDND). The chain crosses the membrane as a helical span at residues 220 to 240 (AVQVLIGNLLALAGAVLYGVY). Residues 241-257 (STLLKREVGDETRVNMK) are Cytoplasmic-facing. A helical membrane pass occupies residues 258 to 278 (IFFGFVGLFNLLFLWPSLIVL). Over 279–292 (DFFGWEPFSLPKDP) the chain is Vacuolar. The helical transmembrane segment at 293–313 (KVVVIIFVNCLITFVSDFCWA) threads the bilayer. Over 314–321 (KAMLLTSP) the chain is Cytoplasmic. A helical membrane pass occupies residues 322-342 (LTVTVGLSITIPLAMFGDVIF). At 343–345 (KHK) the chain is on the vacuolar side. Residues 346-366 (TMSALYLFGATLILGSFFIIN) form a helical membrane-spanning segment. Topologically, residues 367-393 (KSSEEEHFENSITASNYESVEVPAANN) are cytoplasmic.

Belongs to the TPT transporter family.

The protein resides in the vacuole membrane. This is an uncharacterized protein from Saccharomyces cerevisiae (strain ATCC 204508 / S288c) (Baker's yeast).